A 64-amino-acid polypeptide reads, in one-letter code: Ferredoxin-2 (64 aa).

4Fe-4S ferredoxin-type domains follow at residues 3–31 (KYLY…MSSA) and 34–64 (YAEV…WREE). Residues Cys-12, Cys-15, Cys-18, and Cys-54 each coordinate [4Fe-4S] cluster.

As to quaternary structure, homodimer. [4Fe-4S] cluster is required as a cofactor.

Functionally, ferredoxins are iron-sulfur proteins that transfer electrons in a wide variety of metabolic reactions. This chain is Ferredoxin-2, found in Nitratidesulfovibrio vulgaris (strain DSM 19637 / Miyazaki F) (Desulfovibrio vulgaris).